The following is a 162-amino-acid chain: 2-C-methyl-D-erythritol 2,4-cyclodiphosphate synthase (162 aa).

Residues Asp-10 and His-12 each contribute to the a divalent metal cation site. Residues 10 to 12 and 36 to 37 contribute to the 4-CDP-2-C-methyl-D-erythritol 2-phosphate site; these read DVH and HS. Residue His-44 coordinates a divalent metal cation. 4-CDP-2-C-methyl-D-erythritol 2-phosphate is bound by residues 58-60, 63-67, and Arg-144; these read DIG and FPDTD.

Belongs to the IspF family. In terms of assembly, homotrimer. The cofactor is a divalent metal cation.

The catalysed reaction is 4-CDP-2-C-methyl-D-erythritol 2-phosphate = 2-C-methyl-D-erythritol 2,4-cyclic diphosphate + CMP. It functions in the pathway isoprenoid biosynthesis; isopentenyl diphosphate biosynthesis via DXP pathway; isopentenyl diphosphate from 1-deoxy-D-xylulose 5-phosphate: step 4/6. Functionally, involved in the biosynthesis of isopentenyl diphosphate (IPP) and dimethylallyl diphosphate (DMAPP), two major building blocks of isoprenoid compounds. Catalyzes the conversion of 4-diphosphocytidyl-2-C-methyl-D-erythritol 2-phosphate (CDP-ME2P) to 2-C-methyl-D-erythritol 2,4-cyclodiphosphate (ME-CPP) with a corresponding release of cytidine 5-monophosphate (CMP). This chain is 2-C-methyl-D-erythritol 2,4-cyclodiphosphate synthase, found in Laribacter hongkongensis (strain HLHK9).